We begin with the raw amino-acid sequence, 249 residues long: Triosephosphate isomerase (249 aa).

Residues asparagine 12 and lysine 14 each contribute to the substrate site. Lysine 14 is modified (N6-acetyllysine). Residue tyrosine 68 is modified to 3'-nitrotyrosine. A Phosphoserine modification is found at serine 80. The Electrophile role is filled by histidine 96. Position 106 is a phosphoserine (serine 106). A Glycyl lysine isopeptide (Lys-Gly) (interchain with G-Cter in SUMO1) cross-link involves residue lysine 142. The residue at position 149 (lysine 149) is an N6-succinyllysine. Lysine 156 carries the post-translational modification N6-acetyllysine; alternate. Position 156 is an N6-succinyllysine; alternate (lysine 156). At serine 159 the chain carries Phosphoserine. Glutamate 166 acts as the Proton acceptor in catalysis. Threonine 173 carries the phosphothreonine modification. Lysine 194 is subject to N6-acetyllysine; alternate. Lysine 194 carries the post-translational modification N6-succinyllysine; alternate. Residue lysine 194 is modified to N6-methyllysine; alternate. The residue at position 198 (serine 198) is a Phosphoserine. Tyrosine 209 bears the 3'-nitrotyrosine mark. Serine 212 carries the post-translational modification Phosphoserine. Residue threonine 214 is modified to Phosphothreonine. Serine 223 bears the Phosphoserine mark. Lysine 238 is modified (N6-acetyllysine).

It belongs to the triosephosphate isomerase family. As to quaternary structure, homodimer.

The protein resides in the cytoplasm. The catalysed reaction is dihydroxyacetone phosphate = methylglyoxal + phosphate. It catalyses the reaction D-glyceraldehyde 3-phosphate = dihydroxyacetone phosphate. The protein operates within carbohydrate degradation; glycolysis; D-glyceraldehyde 3-phosphate from glycerone phosphate: step 1/1. It functions in the pathway carbohydrate biosynthesis; gluconeogenesis. Its function is as follows. Triosephosphate isomerase is an extremely efficient metabolic enzyme that catalyzes the interconversion between dihydroxyacetone phosphate (DHAP) and D-glyceraldehyde-3-phosphate (G3P) in glycolysis and gluconeogenesis. Functionally, it is also responsible for the non-negligible production of methylglyoxal a reactive cytotoxic side-product that modifies and can alter proteins, DNA and lipids. This Canis lupus familiaris (Dog) protein is Triosephosphate isomerase (TPI1).